A 377-amino-acid chain; its full sequence is UDP-N-acetylglucosamine--N-acetylmuramyl-(pentapeptide) pyrophosphoryl-undecaprenol N-acetylglucosamine transferase (377 aa).

Residues 11–13 (TGG), Asn123, Arg164, Ser194, and Gln295 each bind UDP-N-acetyl-alpha-D-glucosamine.

It belongs to the glycosyltransferase 28 family. MurG subfamily.

It localises to the cell inner membrane. It catalyses the reaction di-trans,octa-cis-undecaprenyl diphospho-N-acetyl-alpha-D-muramoyl-L-alanyl-D-glutamyl-meso-2,6-diaminopimeloyl-D-alanyl-D-alanine + UDP-N-acetyl-alpha-D-glucosamine = di-trans,octa-cis-undecaprenyl diphospho-[N-acetyl-alpha-D-glucosaminyl-(1-&gt;4)]-N-acetyl-alpha-D-muramoyl-L-alanyl-D-glutamyl-meso-2,6-diaminopimeloyl-D-alanyl-D-alanine + UDP + H(+). The protein operates within cell wall biogenesis; peptidoglycan biosynthesis. Its function is as follows. Cell wall formation. Catalyzes the transfer of a GlcNAc subunit on undecaprenyl-pyrophosphoryl-MurNAc-pentapeptide (lipid intermediate I) to form undecaprenyl-pyrophosphoryl-MurNAc-(pentapeptide)GlcNAc (lipid intermediate II). The sequence is that of UDP-N-acetylglucosamine--N-acetylmuramyl-(pentapeptide) pyrophosphoryl-undecaprenol N-acetylglucosamine transferase from Opitutus terrae (strain DSM 11246 / JCM 15787 / PB90-1).